We begin with the raw amino-acid sequence, 438 residues long: Protein DJ-1 homolog B (438 aa).

A chloroplast-targeting transit peptide spans 1 to 45 (MASSSLCHRYFNKITVTPFFNTKKLHHYSPRRISLRVNRRSFSIS). PfpI endopeptidase domains lie at 53 to 220 (KKVL…EQLL) and 258 to 424 (PQIL…EKFY).

Belongs to the peptidase C56 family. Homodimer.

The protein localises to the plastid. The protein resides in the chloroplast. In terms of biological role, may be involved in oxidative stress response. The polypeptide is Protein DJ-1 homolog B (DJ1B) (Arabidopsis thaliana (Mouse-ear cress)).